The chain runs to 352 residues: Phosphoribosylformylglycinamidine cyclo-ligase (352 aa).

It belongs to the AIR synthase family.

The protein resides in the cytoplasm. The catalysed reaction is 2-formamido-N(1)-(5-O-phospho-beta-D-ribosyl)acetamidine + ATP = 5-amino-1-(5-phospho-beta-D-ribosyl)imidazole + ADP + phosphate + H(+). Its pathway is purine metabolism; IMP biosynthesis via de novo pathway; 5-amino-1-(5-phospho-D-ribosyl)imidazole from N(2)-formyl-N(1)-(5-phospho-D-ribosyl)glycinamide: step 2/2. In Azoarcus sp. (strain BH72), this protein is Phosphoribosylformylglycinamidine cyclo-ligase.